A 122-amino-acid polypeptide reads, in one-letter code: ORF7a protein (122 aa).

The first 15 residues, 1 to 15 (MKIILFLTLIVFTSC), serve as a signal peptide directing secretion. One can recognise an X4e domain in the interval 16-81 (ELYHYQECVR…RHTYQLRARS (66 aa)). Residues 16–96 (ELYHYQECVR…FIRQEEVQQE (81 aa)) lie on the Virion surface side of the membrane. 2 disulfide bridges follow: Cys23-Cys58 and Cys35-Cys67. A helical transmembrane segment spans residues 97–117 (LYSPLFLIVAALVFLILCFTI). At 118 to 122 (KRKTE) the chain is on the intravirion side. The Di-lysine motif motif lies at 118–122 (KRKTE).

In terms of assembly, interacts with the spike glycoprotein. Interacts with M protein. Interacts with E protein. Interacts with the ORF3a protein. Interacts with human SGT. Interacts with host ITGAL. Interacts with host BST2.

It localises to the virion. It is found in the host endoplasmic reticulum membrane. The protein resides in the host endoplasmic reticulum-Golgi intermediate compartment membrane. The protein localises to the host Golgi apparatus membrane. Plays a role as antagonist of host tetherin (BST2), disrupting its antiviral effect. Acts by binding to BST2 thereby interfering with its glycosylation. May suppress small interfering RNA (siRNA). May bind to host ITGAL, thereby playing a role in attachment or modulation of leukocytes. This Severe acute respiratory syndrome coronavirus (SARS-CoV) protein is ORF7a protein.